A 248-amino-acid polypeptide reads, in one-letter code: ATP synthase subunit a, chloroplastic (248 aa).

Transmembrane regions (helical) follow at residues 38–58, 96–116, 135–155, 200–220, and 221–241; these read QVLL…VLTV, VPFI…GALV, INTT…AGLA, LVVA…VMLL, and GLFT…AYIG.

It belongs to the ATPase A chain family. F-type ATPases have 2 components, CF(1) - the catalytic core - and CF(0) - the membrane proton channel. CF(1) has five subunits: alpha(3), beta(3), gamma(1), delta(1), epsilon(1). CF(0) has four main subunits: a, b, b' and c.

The protein resides in the plastid. It is found in the chloroplast thylakoid membrane. Functionally, key component of the proton channel; it plays a direct role in the translocation of protons across the membrane. This chain is ATP synthase subunit a, chloroplastic, found in Welwitschia mirabilis (Tree tumbo).